Consider the following 206-residue polypeptide: Ribosomal RNA small subunit methyltransferase G (206 aa).

S-adenosyl-L-methionine is bound by residues Gly73, Leu78, 124-125, and Arg139; that span reads VE.

Belongs to the methyltransferase superfamily. RNA methyltransferase RsmG family.

The protein localises to the cytoplasm. The enzyme catalyses guanosine(527) in 16S rRNA + S-adenosyl-L-methionine = N(7)-methylguanosine(527) in 16S rRNA + S-adenosyl-L-homocysteine. Specifically methylates the N7 position of guanine in position 527 of 16S rRNA. This chain is Ribosomal RNA small subunit methyltransferase G, found in Serratia proteamaculans (strain 568).